Reading from the N-terminus, the 464-residue chain is Cysteine--tRNA ligase 1 (464 aa).

C28 provides a ligand contact to Zn(2+). A 'HIGH' region motif is present at residues 30–40 (VTIYDLCHIGH). Residues C209, H234, and E238 each contribute to the Zn(2+) site. The 'KMSKS' region signature appears at 266-270 (KMSKS). Residue K269 coordinates ATP.

This sequence belongs to the class-I aminoacyl-tRNA synthetase family. As to quaternary structure, monomer. Requires Zn(2+) as cofactor.

The protein resides in the cytoplasm. The enzyme catalyses tRNA(Cys) + L-cysteine + ATP = L-cysteinyl-tRNA(Cys) + AMP + diphosphate. This chain is Cysteine--tRNA ligase 1, found in Photobacterium profundum (strain SS9).